The chain runs to 334 residues: NAC domain-containing protein 66 (334 aa).

Residues 11–175 (VPPGFRFHPT…GWVVCRVFKK (165 aa)) form the NAC domain. A DNA-binding region spans residues 111–181 (IGMRKTLVFY…VFKKNNLCKN (71 aa)).

As to expression, mostly expressed in anthers. Also present in pollen, base of siliques and inflorescence stems.

Its subcellular location is the nucleus. Transcription activator of genes involved in biosynthesis of secondary walls. Together with NST1, required for the secondary cell wall thickening of the anther endocethium, which is necessary for anther dehiscence. May also regulate the secondary cell wall lignification of other tissues such as tracheary elements. This is NAC domain-containing protein 66 (NAC066) from Arabidopsis thaliana (Mouse-ear cress).